Consider the following 365-residue polypeptide: Peptide chain release factor 2 (365 aa).

Position 251 is an N5-methylglutamine (glutamine 251).

The protein belongs to the prokaryotic/mitochondrial release factor family. Post-translationally, methylated by PrmC. Methylation increases the termination efficiency of RF2.

It localises to the cytoplasm. Its function is as follows. Peptide chain release factor 2 directs the termination of translation in response to the peptide chain termination codons UGA and UAA. In Neorickettsia sennetsu (strain ATCC VR-367 / Miyayama) (Ehrlichia sennetsu), this protein is Peptide chain release factor 2.